The primary structure comprises 133 residues: CDGSH iron-sulfur domain-containing protein 2 homolog (133 aa).

Residues Met1–Asp35 are Lumenal-facing. A helical membrane pass occupies residues Trp36–Tyr58. Residues Pro59 to Lys133 are Cytoplasmic-facing. [2Fe-2S] cluster-binding residues include Cys99, Cys101, Cys110, and His114.

The protein belongs to the CISD protein family. CISD2 subfamily. [2Fe-2S] cluster serves as cofactor.

The protein resides in the endoplasmic reticulum membrane. The polypeptide is CDGSH iron-sulfur domain-containing protein 2 homolog (Drosophila virilis (Fruit fly)).